A 99-amino-acid chain; its full sequence is Biogenesis of lysosome-related organelles complex 1 subunit SNN1 (99 aa).

Residues 34–94 (SINELRESQA…VVLKRYEKMV (61 aa)) are a coiled coil.

It belongs to the SNAPIN family. In terms of assembly, component of the biogenesis of lysosome-related organelles complex-1 (BLOC-1).

The protein resides in the endosome. Its function is as follows. Component of the biogenesis of lysosome-related organelles complex-1 (BLOC-1), a complex involved in endosomal cargo sorting. The sequence is that of Biogenesis of lysosome-related organelles complex 1 subunit SNN1 (SNN1) from Kluyveromyces lactis (strain ATCC 8585 / CBS 2359 / DSM 70799 / NBRC 1267 / NRRL Y-1140 / WM37) (Yeast).